The following is a 466-amino-acid chain: Trigger factor (466 aa).

Positions 162-243 constitute a PPIase FKBP-type domain; that stretch reads GDVVSIDLSA…VRSVKERELP (82 aa). The interval 428-466 is disordered; that stretch reads GNTIDTSEFFGKRVSAGEAEEAEPADEGAARAASDEATT. Residues 457 to 466 show a composition bias toward low complexity; that stretch reads ARAASDEATT.

This sequence belongs to the FKBP-type PPIase family. Tig subfamily.

The protein localises to the cytoplasm. It catalyses the reaction [protein]-peptidylproline (omega=180) = [protein]-peptidylproline (omega=0). Functionally, involved in protein export. Acts as a chaperone by maintaining the newly synthesized protein in an open conformation. Functions as a peptidyl-prolyl cis-trans isomerase. The protein is Trigger factor of Mycobacterium bovis (strain BCG / Tokyo 172 / ATCC 35737 / TMC 1019).